A 378-amino-acid chain; its full sequence is Acetylornithine deacetylase (378 aa).

Histidine 76 is a Zn(2+) binding site. Aspartate 78 is a catalytic residue. Zn(2+) is bound at residue aspartate 108. Glutamate 140 is a catalytic residue. Residues glutamate 141, glutamate 165, and histidine 351 each coordinate Zn(2+).

This sequence belongs to the peptidase M20A family. ArgE subfamily. As to quaternary structure, homodimer. Requires Zn(2+) as cofactor. The cofactor is Co(2+). Glutathione is required as a cofactor.

It is found in the cytoplasm. The catalysed reaction is N(2)-acetyl-L-ornithine + H2O = L-ornithine + acetate. It functions in the pathway amino-acid biosynthesis; L-arginine biosynthesis; L-ornithine from N(2)-acetyl-L-ornithine (linear): step 1/1. Its function is as follows. Catalyzes the hydrolysis of the amide bond of N(2)-acetylated L-amino acids. Cleaves the acetyl group from N-acetyl-L-ornithine to form L-ornithine, an intermediate in L-arginine biosynthesis pathway, and a branchpoint in the synthesis of polyamines. The polypeptide is Acetylornithine deacetylase (Vibrio cholerae serotype O1 (strain ATCC 39541 / Classical Ogawa 395 / O395)).